Reading from the N-terminus, the 103-residue chain is O2 contryphan Vc1 (103 aa).

The signal sequence occupies residues 1–23; the sequence is MGKLTILFLVAAALLSTQVMVQG. Residues 24-67 constitute a propeptide that is removed on maturation; the sequence is DGAHERTEAEEPQHHGAKRQDGTGGYPVDDVDMMQRIFRTPLKR. The segment covering 25 to 44 has biased composition (basic and acidic residues); sequence GAHERTEAEEPQHHGAKRQD. Residues 25 to 50 are disordered; it reads GAHERTEAEEPQHHGAKRQDGTGGYP. A Pyrrolidone carboxylic acid modification is found at Q68. C70 and C83 are joined by a disulfide. Positions 99-103 are excised as a propeptide; that stretch reads RRGRQ.

It belongs to the O2 superfamily. Post-translationally, pyrrolidone carboxylic acid at position 1 has no significant effect on the structure of contryphan-Vc1. Expressed by the venom gland.

The protein localises to the secreted. Unknown. Intracranial injection of the peptide into mice does not produce toxic effects. In addition, the peptide does not produce any observable changes to normal or depolarization-induced intracellular calcium levels in mouse dorsal root ganglion cells. The polypeptide is O2 contryphan Vc1 (Conus victoriae (Queen Victoria cone)).